Consider the following 127-residue polypeptide: Protein ApaG (127 aa).

Residues aspartate 3 to histidine 127 enclose the ApaG domain.

This chain is Protein ApaG, found in Xanthomonas oryzae pv. oryzae (strain MAFF 311018).